The following is a 142-amino-acid chain: Large ribosomal subunit protein uL13 (142 aa).

Belongs to the universal ribosomal protein uL13 family. As to quaternary structure, part of the 50S ribosomal subunit.

Its function is as follows. This protein is one of the early assembly proteins of the 50S ribosomal subunit, although it is not seen to bind rRNA by itself. It is important during the early stages of 50S assembly. The sequence is that of Large ribosomal subunit protein uL13 from Histophilus somni (strain 129Pt) (Haemophilus somnus).